The primary structure comprises 459 residues: Elongation factor 1-alpha 1 (459 aa).

The region spanning 5 to 242 is the tr-type G domain; sequence KTHINIVVIG…DCIIPPQRPT (238 aa). Positions 14 to 21 are G1; it reads GHVDSGKS. The segment at 70-74 is G2; the sequence is GITID. Residues 91–94 form a G3 region; sequence DAPG. Positions 153-156 are G4; the sequence is NKMD. The segment at 194–196 is G5; sequence SGF. Glutamate 301 and glutamate 374 each carry 5-glutamyl glycerylphosphorylethanolamine.

It belongs to the TRAFAC class translation factor GTPase superfamily. Classic translation factor GTPase family. EF-Tu/EF-1A subfamily.

The protein localises to the cytoplasm. Its function is as follows. This protein promotes the GTP-dependent binding of aminoacyl-tRNA to the A-site of ribosomes during protein biosynthesis. This Oscheius tipulae protein is Elongation factor 1-alpha 1 (eft-1).